Consider the following 279-residue polypeptide: Zinc finger CCCH domain-containing protein 42 (279 aa).

The tract at residues 11 to 77 is disordered; sequence SDHRSSSTPM…KAAVEPQEYP (67 aa). Over residues 16-39 the composition is skewed to low complexity; the sequence is SSTPMATTTSSSASDPAAISPTPS. 3 consecutive C3H1-type zinc fingers follow at residues 79 to 107, 120 to 148, and 186 to 214; these read RPGV…HPAK, RPGE…HPPD, and RPGT…HPNS.

The polypeptide is Zinc finger CCCH domain-containing protein 42 (Oryza sativa subsp. japonica (Rice)).